Consider the following 601-residue polypeptide: Elongation factor 4 (601 aa).

Residues 7–189 (SNIRNFSIVA…AIVHRLPPPQ (183 aa)) form the tr-type G domain. GTP contacts are provided by residues 19–24 (DHGKST) and 136–139 (NKVD).

Belongs to the TRAFAC class translation factor GTPase superfamily. Classic translation factor GTPase family. LepA subfamily.

The protein resides in the cell inner membrane. The enzyme catalyses GTP + H2O = GDP + phosphate + H(+). Its function is as follows. Required for accurate and efficient protein synthesis under certain stress conditions. May act as a fidelity factor of the translation reaction, by catalyzing a one-codon backward translocation of tRNAs on improperly translocated ribosomes. Back-translocation proceeds from a post-translocation (POST) complex to a pre-translocation (PRE) complex, thus giving elongation factor G a second chance to translocate the tRNAs correctly. Binds to ribosomes in a GTP-dependent manner. The chain is Elongation factor 4 from Rhodopseudomonas palustris (strain BisB18).